The primary structure comprises 268 residues: Small ribosomal subunit protein uS2 (268 aa).

It belongs to the universal ribosomal protein uS2 family.

This Caulobacter vibrioides (strain ATCC 19089 / CIP 103742 / CB 15) (Caulobacter crescentus) protein is Small ribosomal subunit protein uS2.